The following is a 524-amino-acid chain: MATAAVAVREDSGSGMKAELAPRPGAEGREMTQEEKLQLRKEKKQQKKKRKEEKGTETETGSAVSAAQCQVGPAKHLAGPDSQLGTAKEKVPAGRSKAELRAERRAKQEAERAMKQARKGDQGGPPPQACPSTAGETPSGVKRLPEHSQVDDPTLLRRLVKKPERQQVPTRKDYGSKVSLFSHLPQYSRQNSLTQFMSIPSSVIHPAMVRLGLQYSQGLVSGSNARCIALLRALQQVIQDYTTPPSEELSRDLVNKLKPYFSFLTQCRPLSASMYNAIKLLNKEITGVSGSKREEEAKSELRAAIDRYIKEKIVLAAQAISRFAYKKISNGDVILVYGCSSLVSHILQEAWAKGRQFRVVVVDSRPRLEAKHTLRSLVRAGVPASYLLIPAASYVLPEVSKVLLGAHALLANGSVMSRVGTAQLALVARAHNVPVLVCCETYKFCERVQTDAFVSNELDDPDDLLCERGEHVALANWQNHSSLRLLNLVYDVTPPELVDLVITELGMIPCSSVPVVLRVKSSDQ.

The interval 1 to 173 (MATAAVAVRE…ERQQVPTRKD (173 aa)) is disordered. An N-acetylalanine modification is found at Ala2. Ser12 carries the post-translational modification Phosphoserine. Basic and acidic residues predominate over residues 26 to 40 (AEGREMTQEEKLQLR). Residues 41–51 (KEKKQQKKKRK) show a composition bias toward basic residues. Thr86 bears the Phosphothreonine mark. Basic and acidic residues-rich tracts occupy residues 87–121 (AKEKVPAGRSKAELRAERRAKQEAERAMKQARKGD) and 161–173 (KKPERQQVPTRKD). The may bind the chemical integrated stress response (ISR) inhibitor ISRIB stretch occupies residues 171–180 (RKDYGSKVSL).

It belongs to the eIF-2B alpha/beta/delta subunits family. As to quaternary structure, component of the translation initiation factor 2B (eIF2B) complex which is a heterodecamer of two sets of five different subunits: alpha, beta, gamma, delta and epsilon. Subunits alpha, beta and delta comprise a regulatory subcomplex and subunits epsilon and gamma comprise a catalytic subcomplex. Within the complex, the hexameric regulatory complex resides at the center, with the two heterodimeric catalytic subcomplexes bound on opposite sides.

It is found in the cytoplasm. Its subcellular location is the cytosol. Activated by the chemical integrated stress response (ISR) inhibitor ISRIB which stimulates guanine nucleotide exchange factor activity for both phosphorylated and unphosphorylated eIF2. Its function is as follows. Acts as a component of the translation initiation factor 2B (eIF2B) complex, which catalyzes the exchange of GDP for GTP on eukaryotic initiation factor 2 (eIF2) gamma subunit. Its guanine nucleotide exchange factor activity is repressed when bound to eIF2 complex phosphorylated on the alpha subunit, thereby limiting the amount of methionyl-initiator methionine tRNA available to the ribosome and consequently global translation is repressed. The polypeptide is Translation initiation factor eIF2B subunit delta (EIF2B4) (Bos taurus (Bovine)).